The primary structure comprises 79 residues: Schistosomin (79 aa).

Post-translationally, contains four disulfide bonds. Growth-controlling neurosecretory light green cells, in the cerebral ganglia of the CNS.

The protein resides in the secreted. Functionally, anti-gonadotropic neuropeptide. It also decreases the binding capacity of calfluxin to membrane-bound receptors of the albumen gland. This leads to inhibition of the reproductive activities of the infected snail. This Lymnaea stagnalis (Great pond snail) protein is Schistosomin.